The chain runs to 467 residues: 3-isopropylmalate dehydratase large subunit (467 aa).

Residues cysteine 348, cysteine 408, and cysteine 411 each contribute to the [4Fe-4S] cluster site. The segment at 417 to 445 (DQLTPGERSASTSNRNFEGRQGKGGRTHL) is disordered.

This sequence belongs to the aconitase/IPM isomerase family. LeuC type 1 subfamily. Heterodimer of LeuC and LeuD. The cofactor is [4Fe-4S] cluster.

It carries out the reaction (2R,3S)-3-isopropylmalate = (2S)-2-isopropylmalate. It participates in amino-acid biosynthesis; L-leucine biosynthesis; L-leucine from 3-methyl-2-oxobutanoate: step 2/4. Its function is as follows. Catalyzes the isomerization between 2-isopropylmalate and 3-isopropylmalate, via the formation of 2-isopropylmaleate. The sequence is that of 3-isopropylmalate dehydratase large subunit from Saccharopolyspora erythraea (strain ATCC 11635 / DSM 40517 / JCM 4748 / NBRC 13426 / NCIMB 8594 / NRRL 2338).